Consider the following 461-residue polypeptide: D-phenylhydantoinase (461 aa).

A divalent metal cation contacts are provided by H59, H61, and K151. N6-carboxylysine is present on K151. Y156 lines the substrate pocket. Residues H182 and H239 each coordinate a divalent metal cation. Residue S286 coordinates substrate. An a divalent metal cation-binding site is contributed by D313. Residue N335 participates in substrate binding.

It belongs to the metallo-dependent hydrolases superfamily. Hydantoinase/dihydropyrimidinase family. As to quaternary structure, homotetramer. A divalent metal cation is required as a cofactor. Carboxylation allows a single lysine to coordinate two divalent metal cations.

The catalysed reaction is D-5-phenylhydantoin + H2O = N-carbamoyl-D-phenylglycine + H(+). In terms of biological role, catalyzes the stereospecific hydrolysis of the cyclic amide bond of D-hydantoin derivatives with an aromatic side chains at the 5'-position. Has no activity on dihydropyrimidines. The physiological function is unknown. The sequence is that of D-phenylhydantoinase from Escherichia coli O7:K1 (strain IAI39 / ExPEC).